The chain runs to 2542 residues: MSYPFGKEETTTEKQLFEFFCECLRRGDWELAQACVPQLQRGQGEIPQKVEDILQALVQCPILLRCGPDINPQRLAWLWLLVLEKWLPPEKKLLSTVFRRKLEFLFLSEDLQGGIPETILKELFETLAQGPAGCTSDRSQRWESGAPQLSPEAVSMLWNLLKQAPGPAQALLELLLEERHSASLCHSSLQKSLLDLIRKALQTLRDPASQPAGVTDAVCGALQALCCTAELPEGEWHVLCEELLETCRTEGSPLKEERLLGCLLHKAGRSLLSLYGHTYAEKVAERPPKASLSGKDHPDPERAMLALFSTPDPAHAWKMAFFYCLSNNKHFLEQILVTALTLLKEEDFPSLGYLLDREFRPLSHLLVLLGWTHCQSLESAKRLLQTLYRNQDQGHDELLRDACEGLWAHLEVLEWCVQQSSSLIPKRELLCHLHGGDSHSVLYSLHHLTNLPALREEEVLKLLQKVPTKDLQGEHDTHDASVPEHLSQCQSLTLYQGFCAMKYAVYALCVNSHQHSQCPDCRDSASSEELALVEPGRDSLPSPGASHLFPTYLARCRQYLQRIPDSLCLEILENIFSLLLITSADLHPEPHLPEDYAEDDDIEGKGPWGLWSPSESPQHIAATERRSERASMGPRDLAPTGPGCPKGEPKDNSPGPHTHSFLDLKHFTSSLSGFLADEFAIGAFLSLIQEQLNELSSHRTPEETELLEDQSCWAARDGLQGRLHRFSKVLSEAQWRYKVVTSNQSSEEQPSRRYRPTAKRHSSLRRGRRTRRTRADGRERGSNPSLEGTSSELSTSTSEGSLSAVSGQVEADNRFQPQPQSSIIPMMFSPPESLLASCILRGNFAEAHQVVLMFNLKSSPSAGELMFVERYQEVIQELARVEHKIENQNSDGGNNTVRRTGSGRSTLQAIGSAAAAGMVFYSISDVTDKLLSPSEDPIPTLQEDFWINAALTETNTPLRGVLEDLSPPAMAAFDLACCQCQLWKTCKQLLETAERRLSSSLEGRGRRLDQVVLNPDGMRGFPFVLQQISKILSYPLTVTGLTKSETLEERGGGAPRCSISELLQMCWPSLTEDCIASHTSLSQQLDQALQSLREALTLSEPKSTPLTCLVEQAAQKAPEAEAHPVHIQSQLLQKTLGKQTLAGPRQTDYVGAFFSYCSSLAKVLLRSLSSDPDNVEVKVGNPFVLLQQSSSQLVSHLLLERQVPPDRLAALLAQEHLNLSVPQVIVSCCCEPLTLCLSRQSQQASSLTAHLGMLAQGHASHLLDGLPLSVLGSPRPSENPSAERKSDSSPKDSLPAFTASALAFLKSRSKILAMVACLRASRGTKVSRPSLSWKELRGRREAPLTAEKVAQECEHLLEQFPVFEAALLANWEPLQQASESRPSLAASLCGQARLSTVLLGLHSTLAQDVVTEAFEEALVARDWPRALQLIDVYGQDSDDLSSVRDSVLTCATVCDKEGWQYLFPVKDASLRSQLALRFVDKWPLESCLEILAYCVSDMAVPEELKSELQRKLTELRVYQKILGLQDPPVWCDWQTLRSCCAEDPSTVMDMMLGSQEYELCEEWGCLYPIPREHLVSLHHKHLLYLLERREYEKALQLLQRIPDPTMCLEVTERSLDQHPSLATSHFLANYLTSHFYGELTTDRHHEIQALYMGSKVLLTLPEQHRASYAHLSSSPLLMLEQLLMNMKVDWATTAVQTLQQLLAGQDIGFTLDEVDSLLSRYAGKALDLPYPLREKRSDSMIHLQEPVHQASDPETLSRSSSAEFSAAAAAPAPAAPGSALVCSPSPKERAFPQTQPPLEFVPPETPPARDQWVPDETESMCMVCCREHFTMFNRRHHCRRCGRLVCGSCSTKKMVVEGCRENPTRVCDQCYSYYNKDAPEESPCQSEVPDSAKNESPSYSAVVRIPKATEVEWILSLNEEENELVRSEFYYEQAPSASLCIAILNLHRDSIACGHQLIEHCCRLSRGLTNPEVDAGLLIDIMKQLLFSAKMMFVKAGQSQDLALCDSYISKVDVLHILVAAAYRHMPSLDQILQPASVTRLRNQLLEAEYYQLGVEVSTKTGLDSTGAWHAWGMACLKAGNLTAAREKFSRCLKPPLDLNQLSHGSRLVQDVVEYLESTVRPLVSLQDDDYFATLRELEATLRTQSLFLEAIPDGKIMNNTYYQECLFYLHNYSTNLAIISFYMRHNCLREALLHLLNKESPAEVFIEGIFQPSYKSGKLHTLENLLESIDPTLESWGAYLIAACQHLQKKNYYHILYELQQFMKDQVRAAMTCIRFFSHKAKSYTELGEKLSWLLKAKDHLKIYLQENSRSSGRKKTTFFRKKMAAADVSRHMNTLQLQMEVTRFLHRCESARTSQITTLPLPTLFGNNHMKMEVACQVMLGGKNVEDGFGIAFRVLQDFQLDAAVTYCRAARQLVEKEKYGEIRQLLKCVSESGMAAKSDGDTILLNCLEAFKRIPPQELEGLIQAIHSDDNKVRAYLTCCKLRSAYLIAVKQEHTQAAALVQQVQQAAKSSGDSVVQDICAQWLLTSHSRGAHGSGSRK.

Disordered regions lie at residues 591–658 and 740–811; these read HLPE…GPHT and VTSN…QVEA. Residues serine 612 and serine 616 each carry the phosphoserine modification. Residues 752 to 772 show a composition bias toward basic residues; the sequence is RRYRPTAKRHSSLRRGRRTRR. Low complexity predominate over residues 785 to 803; it reads SLEGTSSELSTSTSEGSLS. Serine 798 bears the Phosphoserine mark. Residues 866–891 are a coiled coil; that stretch reads MFVERYQEVIQELARVEHKIENQNSD. Positions 1273–1292 are disordered; the sequence is SPRPSENPSAERKSDSSPKD. A compositionally biased stretch (basic and acidic residues) spans 1281 to 1290; it reads SAERKSDSSP. Positions 1495-1522 form a coiled coil; sequence VSDMAVPEELKSELQRKLTELRVYQKIL. Phosphoserine is present on residues serine 1739, serine 1761, serine 1783, and serine 1785. The tract at residues 1746-1807 is disordered; the sequence is PVHQASDPET…LEFVPPETPP (62 aa). Residues 1757-1779 show a composition bias toward low complexity; that stretch reads SRSSSAEFSAAAAAPAPAAPGSA. The FYVE-type zinc-finger motif lies at 1815-1875; sequence DETESMCMVC…VCDQCYSYYN (61 aa). Residues cysteine 1821, cysteine 1824, cysteine 1838, cysteine 1841, cysteine 1846, cysteine 1849, cysteine 1867, and cysteine 1870 each coordinate Zn(2+).

Belongs to the ZFYVE26 family. Interacts with AP5Z1, AP5B1, AP5S1 and SPG11. Interacts with TTC19 and KIF13A.

It localises to the cytoplasm. Its subcellular location is the cytoskeleton. It is found in the microtubule organizing center. The protein resides in the centrosome. The protein localises to the midbody. In terms of biological role, phosphatidylinositol 3-phosphate-binding protein required for the abscission step in cytokinesis: recruited to the midbody during cytokinesis and acts as a regulator of abscission. May also be required for efficient homologous recombination DNA double-strand break repair. This chain is Zinc finger FYVE domain-containing protein 26 (Zfyve26), found in Rattus norvegicus (Rat).